A 265-amino-acid chain; its full sequence is 4-hydroxy-tetrahydrodipicolinate reductase (265 aa).

9 to 14 (GPRGRM) serves as a coordination point for NAD(+). Residue K37 participates in NADP(+) binding. NAD(+) contacts are provided by residues 99–101 (GTT) and 125–128 (APNF). H155 serves as the catalytic Proton donor/acceptor. H156 contacts (S)-2,3,4,5-tetrahydrodipicolinate. The active-site Proton donor is K159. Residue 165-166 (GT) coordinates (S)-2,3,4,5-tetrahydrodipicolinate. The segment covering 178-190 (RESQKQGHPKEEE) has biased composition (basic and acidic residues). A disordered region spans residues 178-200 (RESQKQGHPKEEETLPGARGADM).

Belongs to the DapB family.

Its subcellular location is the cytoplasm. The catalysed reaction is (S)-2,3,4,5-tetrahydrodipicolinate + NAD(+) + H2O = (2S,4S)-4-hydroxy-2,3,4,5-tetrahydrodipicolinate + NADH + H(+). It carries out the reaction (S)-2,3,4,5-tetrahydrodipicolinate + NADP(+) + H2O = (2S,4S)-4-hydroxy-2,3,4,5-tetrahydrodipicolinate + NADPH + H(+). Its pathway is amino-acid biosynthesis; L-lysine biosynthesis via DAP pathway; (S)-tetrahydrodipicolinate from L-aspartate: step 4/4. In terms of biological role, catalyzes the conversion of 4-hydroxy-tetrahydrodipicolinate (HTPA) to tetrahydrodipicolinate. In Oceanobacillus iheyensis (strain DSM 14371 / CIP 107618 / JCM 11309 / KCTC 3954 / HTE831), this protein is 4-hydroxy-tetrahydrodipicolinate reductase.